The primary structure comprises 136 residues: Protein NrdI (136 aa).

The protein belongs to the NrdI family.

Probably involved in ribonucleotide reductase function. The chain is Protein NrdI from Klebsiella pneumoniae (strain 342).